A 620-amino-acid polypeptide reads, in one-letter code: uncharacterized protein (620 aa).

Low complexity-rich tracts occupy residues 278–290 and 301–319; these read RPPS…AGEP and ASTA…TRPT. Positions 278-620 are disordered; the sequence is RPPSGSGEAA…KSQPPAAHTA (343 aa). Over residues 336-411 the composition is skewed to basic and acidic residues; that stretch reads ARPESEEQTD…QESQVARRDE (76 aa). Composition is skewed to pro residues over residues 446–470 and 481–500; these read VPGP…PPMT and RCPP…PPRP. 2 stretches are compositionally biased toward low complexity: residues 501–512 and 522–541; these read SSDTPLSAVSRP and TARV…YSPA. Pro residues predominate over residues 542–551; that stretch reads PLSPPSPVSP. Low complexity predominate over residues 597–607; it reads SVPSSASPSAS.

Belongs to the herpesviridae US22 family.

This is an uncharacterized protein from Homo sapiens (Human).